A 359-amino-acid chain; its full sequence is 5-amino-6-(D-ribitylamino)uracil--L-tyrosine 4-hydroxyphenyl transferase (359 aa).

A Radical SAM core domain is found at 45-282 (VTYVVNANIN…TYAISRIFFK (238 aa)). 3 residues coordinate [4Fe-4S] cluster: cysteine 59, cysteine 63, and cysteine 66.

Belongs to the radical SAM superfamily. CofH family. Consists of two subunits, CofG and CofH. The cofactor is [4Fe-4S] cluster.

It carries out the reaction 5-amino-6-(D-ribitylamino)uracil + L-tyrosine + S-adenosyl-L-methionine = 5-amino-5-(4-hydroxybenzyl)-6-(D-ribitylimino)-5,6-dihydrouracil + 2-iminoacetate + 5'-deoxyadenosine + L-methionine + H(+). The protein operates within cofactor biosynthesis; coenzyme F0 biosynthesis. Its function is as follows. Catalyzes the radical-mediated synthesis of 5-amino-5-(4-hydroxybenzyl)-6-(D-ribitylimino)-5,6-dihydrouracil from 5-amino-6-(D-ribitylamino)uracil and L-tyrosine. The sequence is that of 5-amino-6-(D-ribitylamino)uracil--L-tyrosine 4-hydroxyphenyl transferase from Methanococcus maripaludis (strain C5 / ATCC BAA-1333).